Here is a 223-residue protein sequence, read N- to C-terminus: Deoxyribose-phosphate aldolase (223 aa).

The Proton donor/acceptor role is filled by Asp-92. Lys-158 functions as the Schiff-base intermediate with acetaldehyde in the catalytic mechanism. The active-site Proton donor/acceptor is the Lys-188.

Belongs to the DeoC/FbaB aldolase family. DeoC type 1 subfamily.

The protein resides in the cytoplasm. The enzyme catalyses 2-deoxy-D-ribose 5-phosphate = D-glyceraldehyde 3-phosphate + acetaldehyde. Its pathway is carbohydrate degradation; 2-deoxy-D-ribose 1-phosphate degradation; D-glyceraldehyde 3-phosphate and acetaldehyde from 2-deoxy-alpha-D-ribose 1-phosphate: step 2/2. In terms of biological role, catalyzes a reversible aldol reaction between acetaldehyde and D-glyceraldehyde 3-phosphate to generate 2-deoxy-D-ribose 5-phosphate. The polypeptide is Deoxyribose-phosphate aldolase (Mycolicibacterium paratuberculosis (strain ATCC BAA-968 / K-10) (Mycobacterium paratuberculosis)).